The following is a 97-amino-acid chain: Zinc metalloproteinase-disintegrin-like bothrojarin-4 (97 aa).

Residues 4 to 90 (PPVCGNYFVE…DCPTDRFRRN (87 aa)) enclose the Disintegrin domain. Positions 6, 9, 11, 13, 16, and 19 each coordinate Ca(2+). 7 cysteine pairs are disulfide-bonded: Cys7-Cys36, Cys18-Cys31, Cys20-Cys26, Cys30-Cys53, Cys44-Cys50, Cys49-Cys75, and Cys62-Cys82. Asn32 carries N-linked (GlcNAc...) asparagine glycosylation. The D/ECD-tripeptide; atypical (KCD) motif lies at 68–70 (KCD).

The protein belongs to the venom metalloproteinase (M12B) family. P-III subfamily. P-IIIa sub-subfamily. In terms of assembly, monomer. Zn(2+) serves as cofactor. In terms of tissue distribution, expressed by the venom gland.

The protein localises to the secreted. Functionally, the hemorrhagic metalloproteinase-disintegrin-like bothrojarin-1 is a potent inhibitor of collagen-induced platelet aggregation by blockage of alpha-2/beta-1 (ITGA2/ITGB1) integrin. It does not present any fibrinogen-clotting activity. The sequence is that of Zinc metalloproteinase-disintegrin-like bothrojarin-4 from Bothrops jararaca (Jararaca).